The following is a 237-amino-acid chain: LexA repressor (237 aa).

The H-T-H motif DNA-binding region spans 26–46; it reads FDEMKIALELTSKSGIHRLIT. Catalysis depends on for autocatalytic cleavage activity residues Ser158 and Lys196.

Belongs to the peptidase S24 family. Homodimer.

The enzyme catalyses Hydrolysis of Ala-|-Gly bond in repressor LexA.. Represses a number of genes involved in the response to DNA damage (SOS response), including recA and lexA. In the presence of single-stranded DNA, RecA interacts with LexA causing an autocatalytic cleavage which disrupts the DNA-binding part of LexA, leading to derepression of the SOS regulon and eventually DNA repair. The chain is LexA repressor from Bartonella quintana (strain Toulouse) (Rochalimaea quintana).